The following is a 428-amino-acid chain: ATP-dependent RNA helicase RhlB (428 aa).

Positions 9–37 (QKFSDFALHPLVVEALENKGFQYCTPIQA) match the Q motif motif. The 180-residue stretch at 40–219 (LPLTLSGRDV…FEQMNNAEYV (180 aa)) folds into the Helicase ATP-binding domain. 53 to 60 (AQTGTGKT) is an ATP binding site. The DEAD box signature appears at 165 to 168 (DEAD). The 146-residue stretch at 245-390 (RLLQTLIEEE…VSKYNSDALL (146 aa)) folds into the Helicase C-terminal domain. The tract at residues 394–428 (PAPKRLARTRTGNGPRRNSAPRRSGAPRNNRKRPG) is disordered.

It belongs to the DEAD box helicase family. RhlB subfamily. Component of the RNA degradosome, which is a multiprotein complex involved in RNA processing and mRNA degradation.

The protein localises to the cytoplasm. The catalysed reaction is ATP + H2O = ADP + phosphate + H(+). DEAD-box RNA helicase involved in RNA degradation. Has RNA-dependent ATPase activity and unwinds double-stranded RNA. This Yersinia pseudotuberculosis serotype O:1b (strain IP 31758) protein is ATP-dependent RNA helicase RhlB.